The primary structure comprises 423 residues: Serine--tRNA ligase (423 aa).

Position 229 to 231 (229 to 231 (TAE)) interacts with L-serine. 260–262 (RRE) provides a ligand contact to ATP. E283 is an L-serine binding site. ATP is bound at residue 347-350 (EISS). An L-serine-binding site is contributed by S383.

Belongs to the class-II aminoacyl-tRNA synthetase family. Type-1 seryl-tRNA synthetase subfamily. As to quaternary structure, homodimer. The tRNA molecule binds across the dimer.

The protein resides in the cytoplasm. The catalysed reaction is tRNA(Ser) + L-serine + ATP = L-seryl-tRNA(Ser) + AMP + diphosphate + H(+). It carries out the reaction tRNA(Sec) + L-serine + ATP = L-seryl-tRNA(Sec) + AMP + diphosphate + H(+). It participates in aminoacyl-tRNA biosynthesis; selenocysteinyl-tRNA(Sec) biosynthesis; L-seryl-tRNA(Sec) from L-serine and tRNA(Sec): step 1/1. Catalyzes the attachment of serine to tRNA(Ser). Is also able to aminoacylate tRNA(Sec) with serine, to form the misacylated tRNA L-seryl-tRNA(Sec), which will be further converted into selenocysteinyl-tRNA(Sec). The sequence is that of Serine--tRNA ligase from Trichlorobacter lovleyi (strain ATCC BAA-1151 / DSM 17278 / SZ) (Geobacter lovleyi).